Consider the following 253-residue polypeptide: Indole-3-glycerol phosphate synthase (253 aa).

Belongs to the TrpC family.

It catalyses the reaction 1-(2-carboxyphenylamino)-1-deoxy-D-ribulose 5-phosphate + H(+) = (1S,2R)-1-C-(indol-3-yl)glycerol 3-phosphate + CO2 + H2O. It participates in amino-acid biosynthesis; L-tryptophan biosynthesis; L-tryptophan from chorismate: step 4/5. The protein is Indole-3-glycerol phosphate synthase of Exiguobacterium sp. (strain ATCC BAA-1283 / AT1b).